Reading from the N-terminus, the 234-residue chain is Peptidase E (234 aa).

Catalysis depends on charge relay system residues Ser-123, Asp-138, and His-160.

Belongs to the peptidase S51 family.

The protein resides in the cytoplasm. It catalyses the reaction Dipeptidase E catalyzes the hydrolysis of dipeptides Asp-|-Xaa. It does not act on peptides with N-terminal Glu, Asn or Gln, nor does it cleave isoaspartyl peptides.. Hydrolyzes dipeptides containing N-terminal aspartate residues. May play a role in allowing the cell to use peptide aspartate to spare carbon otherwise required for the synthesis of the aspartate family of amino acids. The sequence is that of Peptidase E from Actinobacillus pleuropneumoniae serotype 5b (strain L20).